Consider the following 412-residue polypeptide: Serine hydroxymethyltransferase (412 aa).

Residues leucine 116 and 120–122 contribute to the (6S)-5,6,7,8-tetrahydrofolate site; that span reads GHL. Residue lysine 225 is modified to N6-(pyridoxal phosphate)lysine. (6S)-5,6,7,8-tetrahydrofolate is bound by residues glutamate 241 and 350-352; that span reads SPF.

It belongs to the SHMT family. In terms of assembly, homodimer. It depends on pyridoxal 5'-phosphate as a cofactor.

It localises to the cytoplasm. The enzyme catalyses (6R)-5,10-methylene-5,6,7,8-tetrahydrofolate + glycine + H2O = (6S)-5,6,7,8-tetrahydrofolate + L-serine. Its pathway is one-carbon metabolism; tetrahydrofolate interconversion. It participates in amino-acid biosynthesis; glycine biosynthesis; glycine from L-serine: step 1/1. In terms of biological role, catalyzes the reversible interconversion of serine and glycine with tetrahydrofolate (THF) serving as the one-carbon carrier. This reaction serves as the major source of one-carbon groups required for the biosynthesis of purines, thymidylate, methionine, and other important biomolecules. Also exhibits THF-independent aldolase activity toward beta-hydroxyamino acids, producing glycine and aldehydes, via a retro-aldol mechanism. The chain is Serine hydroxymethyltransferase from Enterococcus faecalis (strain ATCC 700802 / V583).